A 366-amino-acid chain; its full sequence is UDP-N-acetylglucosamine--N-acetylmuramyl-(pentapeptide) pyrophosphoryl-undecaprenol N-acetylglucosamine transferase (366 aa).

Residues 14-16 (TGG), N125, R168, S196, and Q297 contribute to the UDP-N-acetyl-alpha-D-glucosamine site.

The protein belongs to the glycosyltransferase 28 family. MurG subfamily.

It localises to the cell inner membrane. It carries out the reaction di-trans,octa-cis-undecaprenyl diphospho-N-acetyl-alpha-D-muramoyl-L-alanyl-D-glutamyl-meso-2,6-diaminopimeloyl-D-alanyl-D-alanine + UDP-N-acetyl-alpha-D-glucosamine = di-trans,octa-cis-undecaprenyl diphospho-[N-acetyl-alpha-D-glucosaminyl-(1-&gt;4)]-N-acetyl-alpha-D-muramoyl-L-alanyl-D-glutamyl-meso-2,6-diaminopimeloyl-D-alanyl-D-alanine + UDP + H(+). It functions in the pathway cell wall biogenesis; peptidoglycan biosynthesis. Its function is as follows. Cell wall formation. Catalyzes the transfer of a GlcNAc subunit on undecaprenyl-pyrophosphoryl-MurNAc-pentapeptide (lipid intermediate I) to form undecaprenyl-pyrophosphoryl-MurNAc-(pentapeptide)GlcNAc (lipid intermediate II). The sequence is that of UDP-N-acetylglucosamine--N-acetylmuramyl-(pentapeptide) pyrophosphoryl-undecaprenol N-acetylglucosamine transferase from Rhodopseudomonas palustris (strain BisB5).